The sequence spans 121 residues: NADH-quinone oxidoreductase subunit A 2 (121 aa).

The next 3 membrane-spanning stretches (helical) occupy residues 6–26 (FLPV…TLFV), 60–80 (VPFF…MFLF), and 89–109 (IGFV…VGFA).

It belongs to the complex I subunit 3 family. In terms of assembly, NDH-1 is composed of 14 different subunits. Subunits NuoA, H, J, K, L, M, N constitute the membrane sector of the complex.

It is found in the cell inner membrane. The catalysed reaction is a quinone + NADH + 5 H(+)(in) = a quinol + NAD(+) + 4 H(+)(out). Functionally, NDH-1 shuttles electrons from NADH, via FMN and iron-sulfur (Fe-S) centers, to quinones in the respiratory chain. The immediate electron acceptor for the enzyme in this species is believed to be ubiquinone. Couples the redox reaction to proton translocation (for every two electrons transferred, four hydrogen ions are translocated across the cytoplasmic membrane), and thus conserves the redox energy in a proton gradient. The chain is NADH-quinone oxidoreductase subunit A 2 from Rhizobium meliloti (strain 1021) (Ensifer meliloti).